Here is a 338-residue protein sequence, read N- to C-terminus: tRNA N6-adenosine threonylcarbamoyltransferase (338 aa).

Fe cation contacts are provided by His111 and His115. Residues 134–138 (LVSGG), Asp167, Gly180, and Asn272 each bind substrate. Asp300 is a binding site for Fe cation.

The protein belongs to the KAE1 / TsaD family. Fe(2+) is required as a cofactor.

Its subcellular location is the cytoplasm. The catalysed reaction is L-threonylcarbamoyladenylate + adenosine(37) in tRNA = N(6)-L-threonylcarbamoyladenosine(37) in tRNA + AMP + H(+). In terms of biological role, required for the formation of a threonylcarbamoyl group on adenosine at position 37 (t(6)A37) in tRNAs that read codons beginning with adenine. Is involved in the transfer of the threonylcarbamoyl moiety of threonylcarbamoyl-AMP (TC-AMP) to the N6 group of A37, together with TsaE and TsaB. TsaD likely plays a direct catalytic role in this reaction. The sequence is that of tRNA N6-adenosine threonylcarbamoyltransferase from Aliivibrio fischeri (strain MJ11) (Vibrio fischeri).